The primary structure comprises 357 residues: UPF0283 membrane protein BSUIS_A1077 (357 aa).

Residues 1-36 are disordered; the sequence is MSDKTPRKPTAFRLEQPARVSAASEQEEPRHPRAVK. A compositionally biased stretch (basic and acidic residues) spans 27 to 36; that stretch reads EEPRHPRAVK. The next 2 helical transmembrane spans lie at 78-98 and 109-129; these read ILFGALGILVSFAIGIWTEDL and LGWTALGVAMVALAAFAAIIL.

The protein belongs to the UPF0283 family.

It is found in the cell inner membrane. In Brucella suis (strain ATCC 23445 / NCTC 10510), this protein is UPF0283 membrane protein BSUIS_A1077.